Here is a 357-residue protein sequence, read N- to C-terminus: Actin, cytoplasmic (357 aa).

It belongs to the actin family. In terms of processing, met-1 may be removed after translation.

It localises to the cytoplasm. It is found in the cytoskeleton. The enzyme catalyses ATP + H2O = ADP + phosphate + H(+). Its function is as follows. Actins are highly conserved proteins that are involved in various types of cell motility and are ubiquitously expressed in all eukaryotic cells. The protein is Actin, cytoplasmic of Oxytricha fallax.